The sequence spans 185 residues: Ribosome-recycling factor (185 aa).

It belongs to the RRF family.

It is found in the cytoplasm. In terms of biological role, responsible for the release of ribosomes from messenger RNA at the termination of protein biosynthesis. May increase the efficiency of translation by recycling ribosomes from one round of translation to another. This Bacillus licheniformis (strain ATCC 14580 / DSM 13 / JCM 2505 / CCUG 7422 / NBRC 12200 / NCIMB 9375 / NCTC 10341 / NRRL NRS-1264 / Gibson 46) protein is Ribosome-recycling factor.